The following is a 99-amino-acid chain: Putative gene 45 protein (99 aa).

In Bacillus phage SP01 (Bacteriophage SP01), this protein is Putative gene 45 protein (45).